Reading from the N-terminus, the 572-residue chain is [Pyruvate dehydrogenase [acetyl-transferring]]-phosphatase 1, mitochondrial (572 aa).

The interval 95-122 (NTSGNINMPSPNPKGTETQKSQRSQNDQ) is disordered. In terms of domain architecture, PPM-type phosphatase spans 153–543 (RYDVAQLPSN…DDLTVTVAFF (391 aa)). Aspartate 197, glycine 198, aspartate 424, and aspartate 480 together coordinate Mn(2+). Positions 470–480 (EAQRPAFRYKD) are enriched in basic and acidic residues. Positions 470-492 (EAQRPAFRYKDNNSSSPSGSNPE) are disordered. Residues 481 to 491 (NNSSSPSGSNP) show a composition bias toward low complexity.

It belongs to the PP2C family. Mg(2+) serves as cofactor. Requires Mn(2+) as cofactor. Processed by mitochondrial inner membrane protease (IMP) complex and released to the intermembrane space.

It localises to the mitochondrion intermembrane space. It carries out the reaction O-phospho-L-seryl-[pyruvate dehydrogenase E1 alpha subunit] + H2O = L-seryl-[pyruvate dehydrogenase E1 alpha subunit] + phosphate. Its function is as follows. Catalyzes the dephosphorylation and concomitant reactivation of the E1 alpha subunit (PDA1) of the pyruvate dehydrogenase complex. This Saccharomyces cerevisiae (strain ATCC 204508 / S288c) (Baker's yeast) protein is [Pyruvate dehydrogenase [acetyl-transferring]]-phosphatase 1, mitochondrial (PTC5).